Reading from the N-terminus, the 502-residue chain is 4,4'-diapophytoene desaturase (4,4'-diaponeurosporene-forming) (502 aa).

Position 5 to 17 (5 to 17) interacts with FAD; the sequence is VIGAGVTGLAAAA.

This sequence belongs to the carotenoid/retinoid oxidoreductase family. CrtN subfamily.

The catalysed reaction is 15-cis-4,4'-diapophytoene + 3 FAD + 3 H(+) = all-trans-4,4'-diaponeurosporene + 3 FADH2. The protein operates within carotenoid biosynthesis; staphyloxanthin biosynthesis; staphyloxanthin from farnesyl diphosphate: step 2/5. Involved in the biosynthesis of the yellow-orange carotenoid staphyloxanthin, which plays a role in the virulence via its protective function against oxidative stress. Catalyzes three successive dehydrogenation reactions that lead to the introduction of three double bonds into 4,4'-diapophytoene (dehydrosqualene), with 4,4'-diapophytofluene and 4,4'-diapo-zeta-carotene as intermediates, and 4,4'-diaponeurosporene (the major deep-yellow pigment in staphylococci strains) as the end product. The protein is 4,4'-diapophytoene desaturase (4,4'-diaponeurosporene-forming) of Staphylococcus aureus (strain MW2).